We begin with the raw amino-acid sequence, 436 residues long: Adenosylhomocysteinase (436 aa).

Substrate is bound by residues threonine 62, aspartate 136, and glutamate 161. An NAD(+)-binding site is contributed by 162–164 (TTT). The substrate site is built by lysine 191 and aspartate 195. NAD(+) contacts are provided by residues asparagine 196, 225–230 (GFGDVG), glutamate 248, asparagine 283, 304–306 (IGH), and asparagine 352.

The protein belongs to the adenosylhomocysteinase family. NAD(+) is required as a cofactor.

The protein localises to the cytoplasm. It catalyses the reaction S-adenosyl-L-homocysteine + H2O = L-homocysteine + adenosine. It functions in the pathway amino-acid biosynthesis; L-homocysteine biosynthesis; L-homocysteine from S-adenosyl-L-homocysteine: step 1/1. Its function is as follows. May play a key role in the regulation of the intracellular concentration of adenosylhomocysteine. In Leptospira borgpetersenii serovar Hardjo-bovis (strain JB197), this protein is Adenosylhomocysteinase.